The following is a 156-amino-acid chain: uncharacterized protein (156 aa).

This is an uncharacterized protein from Schizosaccharomyces pombe (strain 972 / ATCC 24843) (Fission yeast).